A 117-amino-acid chain; its full sequence is Small ribosomal subunit protein uS17 (117 aa).

Positions 97–117 (AEGLAAAHAGEPETESAATDA) are disordered.

The protein belongs to the universal ribosomal protein uS17 family. In terms of assembly, part of the 30S ribosomal subunit.

In terms of biological role, one of the primary rRNA binding proteins, it binds specifically to the 5'-end of 16S ribosomal RNA. The sequence is that of Small ribosomal subunit protein uS17 from Rhodopirellula baltica (strain DSM 10527 / NCIMB 13988 / SH1).